Reading from the N-terminus, the 69-residue chain is Consomatin Be1 (69 aa).

The signal sequence occupies residues 1-22 (MEMAYWVMVMMMVWITAPLSEG). The propeptide occupies 23–57 (GKLNDVIRALAPDDVTPQFILRSLISRRRSDSDVR). E58 is subject to 4-carboxyglutamate. A disulfide bridge links C62 with C67. Residue W64 is modified to D-tryptophan. 4-hydroxyproline is present on residues P68 and P69.

Belongs to the conotoxin C superfamily. Consomatin family. Expressed by the venom duct.

It is found in the secreted. Its function is as follows. Moderately activates human somatostatin receptors (SSTR) with a preferential activation of SSTR1 and SSTR4. In vivo, does not cause behavioral changes in mice within a few minutes of intracranial injection, but causes a progressive loss of movement thereafter. Four to five hours after injection, mice recover, even with the highest dose tested. Shows antinociception and antihyperalgesia activities in two mouse models of acute pain, most probably by acting outside the central nervous system. This chain is Consomatin Be1, found in Conus betulinus (Beech cone).